A 517-amino-acid polypeptide reads, in one-letter code: Crotonobetaine/carnitine--CoA ligase (517 aa).

The protein belongs to the ATP-dependent AMP-binding enzyme family.

The catalysed reaction is 4-(trimethylamino)butanoate + ATP + CoA = 4-(trimethylamino)butanoyl-CoA + AMP + diphosphate. The enzyme catalyses crotonobetaine + ATP + CoA = crotonobetainyl-CoA + AMP + diphosphate. It catalyses the reaction (R)-carnitine + ATP + CoA = (R)-carnitinyl-CoA + AMP + diphosphate. It functions in the pathway amine and polyamine metabolism; carnitine metabolism. Its function is as follows. Catalyzes the transfer of CoA to carnitine, generating the initial carnitinyl-CoA needed for the CaiB reaction cycle. Also has activity toward crotonobetaine and gamma-butyrobetaine. The chain is Crotonobetaine/carnitine--CoA ligase from Salmonella choleraesuis (strain SC-B67).